Here is a 201-residue protein sequence, read N- to C-terminus: MCIILIMHHGKIIILSGPSGVGKGSIEKLLLEDEKLKLKFSTSVTSRKPRVNEIEGKDYFFRSEEEFSELIKEKKFIEWSRHLNNYYGTLKSEVDKILGAKFNVLIEIETTGALNILKYYKKKNMLNDVISIFILPPRLEELETRILNRGSETKEEIKIRIKKAKKEIKLKNKFKYNLTNNFLHECVEEVKNILKREIHEI.

A Guanylate kinase-like domain is found at 10–195 (GKIIILSGPS…CVEEVKNILK (186 aa)). 17 to 24 (GPSGVGKG) contacts ATP.

Belongs to the guanylate kinase family.

It localises to the cytoplasm. It catalyses the reaction GMP + ATP = GDP + ADP. Essential for recycling GMP and indirectly, cGMP. In Mycoplasma mobile (strain ATCC 43663 / 163K / NCTC 11711) (Mesomycoplasma mobile), this protein is Guanylate kinase.